The chain runs to 311 residues: Aldose reductase B (311 aa).

An NADP(+)-binding site is contributed by 13–23 (DIHHIPMIGLG). Tyrosine 54 acts as the Proton donor in catalysis. Histidine 116 contacts substrate. Residue 219–273 (SPLGQGKCDLLSNETLKSIADKHNKTVANVIFKWLNQRGIVTIPKSSNPARIIEN) participates in NADP(+) binding.

It belongs to the aldo/keto reductase family.

The enzyme catalyses an alditol + NAD(+) = an aldose + NADH + H(+). It catalyses the reaction an alditol + NADP(+) = an aldose + NADPH + H(+). In terms of biological role, catalyzes the NADPH-dependent reduction of a wide variety of carbonyl-containing compounds to their corresponding alcohols with a broad range of catalytic efficiencies. The chain is Aldose reductase B (alrB) from Dictyostelium discoideum (Social amoeba).